Here is a 422-residue protein sequence, read N- to C-terminus: Tyrosine--tRNA ligase 1 (422 aa).

Tyr36 provides a ligand contact to L-tyrosine. Positions 41–50 (PTAGSLHIGH) match the 'HIGH' region motif. L-tyrosine is bound by residues Tyr173 and Gln177. A 'KMSKS' region motif is present at residues 233 to 237 (KFGKT). Lys236 is an ATP binding site. The 65-residue stretch at 355–419 (SDVVTLLLET…GKKQFAMVKL (65 aa)) folds into the S4 RNA-binding domain.

The protein belongs to the class-I aminoacyl-tRNA synthetase family. TyrS type 1 subfamily. In terms of assembly, homodimer.

The protein resides in the cytoplasm. The catalysed reaction is tRNA(Tyr) + L-tyrosine + ATP = L-tyrosyl-tRNA(Tyr) + AMP + diphosphate + H(+). In terms of biological role, catalyzes the attachment of tyrosine to tRNA(Tyr) in a two-step reaction: tyrosine is first activated by ATP to form Tyr-AMP and then transferred to the acceptor end of tRNA(Tyr). The chain is Tyrosine--tRNA ligase 1 from Vibrio vulnificus (strain CMCP6).